Consider the following 163-residue polypeptide: Nucleotide-binding protein ESA_02876 (163 aa).

This sequence belongs to the YajQ family.

Its function is as follows. Nucleotide-binding protein. The sequence is that of Nucleotide-binding protein ESA_02876 from Cronobacter sakazakii (strain ATCC BAA-894) (Enterobacter sakazakii).